A 328-amino-acid chain; its full sequence is Basic leucine zipper (bZIP) transcription factor atfB (328 aa).

The interval M1 to G39 is disordered. Pro residues predominate over residues G22–N31. The basic motif stretch occupies residues K163–K202. Residues K163 to H226 enclose the bZIP domain. Positions L205 to L219 are leucine-zipper. Residues T250 to S313 form a disordered region. Polar residues predominate over residues A262–L277. The segment covering D283–E305 has biased composition (basic and acidic residues).

It belongs to the bZIP family. ATF subfamily.

It is found in the nucleus. Transcription factor that acts as a key player in the regulatory circuit that integrates secondary metabolism and cellular response to oxidative stress. Regulates the genes involved in development, as well as osmotic, oxidative, and cell wall stresses. Participates in the caspofungin paradoxical effect (CPE), where fungi grow beyond the minimum inhibitory concentration of caspofungin. Plays a role in virulence. The protein is Basic leucine zipper (bZIP) transcription factor atfB of Aspergillus fumigatus (strain ATCC MYA-4609 / CBS 101355 / FGSC A1100 / Af293) (Neosartorya fumigata).